Consider the following 201-residue polypeptide: uncharacterized protein (201 aa).

This is an uncharacterized protein from Caenorhabditis elegans.